The following is a 206-amino-acid chain: tRNA(Phe) 7-((3-amino-3-carboxypropyl)-4-demethylwyosine(37)-N(4))-methyltransferase 2 (206 aa).

It belongs to the TYW3 family.

The enzyme catalyses 4-demethyl-7-[(3S)-3-amino-3-carboxypropyl]wyosine(37) in tRNA(Phe) + S-adenosyl-L-methionine = 7-[(3S)-3-amino-3-carboxypropyl]wyosine(37) in tRNA(Phe) + S-adenosyl-L-homocysteine + H(+). S-adenosyl-L-methionine-dependent methyltransferase that acts as a component of the wyosine derivatives biosynthesis pathway. Probably methylates N-4 position of wybutosine-86 to produce wybutosine-72. The chain is tRNA(Phe) 7-((3-amino-3-carboxypropyl)-4-demethylwyosine(37)-N(4))-methyltransferase 2 from Pyrococcus abyssi (strain GE5 / Orsay).